Consider the following 504-residue polypeptide: Maturase K (504 aa).

Belongs to the intron maturase 2 family. MatK subfamily.

The protein localises to the plastid. It is found in the chloroplast. Its function is as follows. Usually encoded in the trnK tRNA gene intron. Probably assists in splicing its own and other chloroplast group II introns. This chain is Maturase K, found in Wollastonia biflora (Beach sunflower).